Consider the following 143-residue polypeptide: Transcriptional regulator MraZ (143 aa).

SpoVT-AbrB domains are found at residues 5–47 and 76–119; these read QYEH…SLEE and AVEC…SKEV.

Belongs to the MraZ family. In terms of assembly, forms oligomers.

The protein resides in the cytoplasm. It localises to the nucleoid. The polypeptide is Transcriptional regulator MraZ (Thermoanaerobacter sp. (strain X514)).